The following is a 26-amino-acid chain: Small toxic protein ShoB (26 aa).

A helical transmembrane segment spans residues 7–24; it reads LIKRVIKIIIAVLQLILL.

The protein localises to the membrane. Toxic component of a type I toxin-antitoxin (TA) system. May be a toxic protein; overexpression causes cessation of growth and rapid membrane depolarization. Overexpression induces stress-response and a number of membrane protein genes. This Escherichia coli (strain K12) protein is Small toxic protein ShoB (shoB).